A 174-amino-acid chain; its full sequence is RNA pyrophosphohydrolase (174 aa).

One can recognise a Nudix hydrolase domain in the interval 6-149 (GYRPNVGIIL…KRDVYLGALK (144 aa)). Residues 38 to 59 (GGIKPGESPETAMYRELYEEVG) carry the Nudix box motif.

This sequence belongs to the Nudix hydrolase family. RppH subfamily. A divalent metal cation is required as a cofactor.

Its function is as follows. Accelerates the degradation of transcripts by removing pyrophosphate from the 5'-end of triphosphorylated RNA, leading to a more labile monophosphorylated state that can stimulate subsequent ribonuclease cleavage. This Neisseria meningitidis serogroup B (strain ATCC BAA-335 / MC58) protein is RNA pyrophosphohydrolase.